The following is a 45-amino-acid chain: Scolopendra 20417.15 Da toxin (45 aa).

Residues 26–45 (KVANGQEAGQPGAXNMKELH) are disordered.

The protein belongs to the CRISP family. Venom allergen 5-like subfamily. Post-translationally, contains 3 disulfide bonds. In terms of tissue distribution, expressed by the venom gland.

The protein resides in the secreted. In Scolopendra viridicornis nigra (Brazilian giant centipede), this protein is Scolopendra 20417.15 Da toxin.